We begin with the raw amino-acid sequence, 377 residues long: Beta sliding clamp (377 aa).

Belongs to the beta sliding clamp family. Forms a ring-shaped head-to-tail homodimer around DNA which binds and tethers DNA polymerases and other proteins to the DNA. The DNA replisome complex has a single clamp-loading complex (3 tau and 1 each of delta, delta', psi and chi subunits) which binds 3 Pol III cores (1 core on the leading strand and 2 on the lagging strand) each with a beta sliding clamp dimer. Additional proteins in the replisome are other copies of gamma, psi and chi, Ssb, DNA helicase and RNA primase.

The protein localises to the cytoplasm. Confers DNA tethering and processivity to DNA polymerases and other proteins. Acts as a clamp, forming a ring around DNA (a reaction catalyzed by the clamp-loading complex) which diffuses in an ATP-independent manner freely and bidirectionally along dsDNA. Initially characterized for its ability to contact the catalytic subunit of DNA polymerase III (Pol III), a complex, multichain enzyme responsible for most of the replicative synthesis in bacteria; Pol III exhibits 3'-5' exonuclease proofreading activity. The beta chain is required for initiation of replication as well as for processivity of DNA replication. This chain is Beta sliding clamp (dnaN), found in Staphylococcus epidermidis (strain ATCC 35984 / DSM 28319 / BCRC 17069 / CCUG 31568 / BM 3577 / RP62A).